A 501-amino-acid chain; its full sequence is Actin nucleation-promoting factor WASL (501 aa).

N-acetylserine is present on Ser2. Residues 31-138 (LGKKCVTMSS…KAVTDLLGRR (108 aa)) form the WH1 domain. 2 disordered regions span residues 135-158 (LGRR…PMAT) and 180-202 (SHTK…DIGT). Basic residues predominate over residues 183-195 (KEKKKGKAKKKRL). Residues 200–213 (IGTPSNFQHIGHVG) form the CRIB domain. The residue at position 239 (Ser239) is a Phosphoserine; by TNK2. Tyr253 is modified (phosphotyrosine; by FAK1 and TNK2). Disordered regions lie at residues 263–405 (EAVK…KAAL) and 442–501 (QLKS…EWED). Pro residues-rich tracts occupy residues 273–361 (APPP…PPPL) and 368–387 (APPP…PPGL). An Omega-N-methylarginine modification is found at Arg304. 2 WH2 domains span residues 401–418 (NKAA…LKKV) and 429–446 (GRDA…LKSV). The segment covering 442 to 453 (QLKSVSDGQEST) has biased composition (polar residues). 2 positions are modified to phosphoserine: Ser480 and Ser481. Residues 482-501 (DEDEDDDDEEDFQDDDEWED) show a composition bias toward acidic residues.

In terms of assembly, binds actin and the Arp2/3 complex. Interacts with CDC42. Interacts with FCHSD1. Interacts with FCHSD2. Binds to SH3 domains of GRB2. Interacts with the C-terminal SH3 domain of DNMBP. Interacts with SNX9. Interacts with the WW domains of PRPF40A/FBP11. Interacts with PTK2/FAK1. Interacts with PACSIN1, PACSIN2 and PACSIN3. Interacts with NOSTRIN. Binds to TNK2. Interacts with SNX33. Interacts with NONO (via second RRM domain); the interaction is direct. Component of a multiprotein complex with NONO and SFPQ; associates with the complex via direct interaction with NONO. Post-translationally, phosphorylation at Ser-239, Tyr-253, Ser-480 and Ser-481 enhances actin polymerization activity.

The protein localises to the cytoplasm. The protein resides in the cytoskeleton. It is found in the nucleus. In terms of biological role, regulates actin polymerization by stimulating the actin-nucleating activity of the Arp2/3 complex. Involved in various processes, such as mitosis and cytokinesis, via its role in the regulation of actin polymerization. Together with CDC42, involved in the extension and maintenance of the formation of thin, actin-rich surface projections called filopodia. In addition to its role in the cytoplasm, also plays a role in the nucleus by regulating gene transcription, probably by promoting nuclear actin polymerization. Binds to HSF1/HSTF1 and forms a complex on heat shock promoter elements (HSE) that negatively regulates HSP90 expression. Plays a role in dendrite spine morphogenesis. This is Actin nucleation-promoting factor WASL (Wasl) from Rattus norvegicus (Rat).